Consider the following 74-residue polypeptide: Antimicrobial peptide AcrAP1 (74 aa).

The signal sequence occupies residues 1–22 (MEIKYLLTVFLVLLIVSDHCQA). Lysine 40 carries the lysine amide modification. Residues 46 to 74 (DLDGQIDRFRNFRKRDAELEELLSKLPIY) constitute a propeptide that is removed on maturation.

It belongs to the non-disulfide-bridged peptide (NDBP) superfamily. Short antimicrobial peptide (group 4) family. In terms of tissue distribution, expressed by the venom gland.

It is found in the secreted. The protein localises to the target cell membrane. Functionally, has antimicrobial activity against the Gram-positive bacteria S.aureus (MIC=8 uM) and the yeast C.albicans (MIC=16 uM). Causes hemolysis on horse erythrocytes (64 uM for 100% hemolysis). Minimum bactericidal concentrations have also been tested against S.aureus and is four-fold higher (MBC=32 uM). The polypeptide is Antimicrobial peptide AcrAP1 (Androctonus crassicauda (Arabian fat-tailed scorpion)).